Here is a 346-residue protein sequence, read N- to C-terminus: Elongation factor Ts (346 aa).

The tract at residues 80-83 (TDFV) is involved in Mg(2+) ion dislocation from EF-Tu.

This sequence belongs to the EF-Ts family.

Its subcellular location is the cytoplasm. Its function is as follows. Associates with the EF-Tu.GDP complex and induces the exchange of GDP to GTP. It remains bound to the aminoacyl-tRNA.EF-Tu.GTP complex up to the GTP hydrolysis stage on the ribosome. The chain is Elongation factor Ts from Streptococcus agalactiae serotype Ia (strain ATCC 27591 / A909 / CDC SS700).